The primary structure comprises 70 residues: Small ribosomal subunit protein bS21B (70 aa).

The tract at residues 37 to 70 is disordered; it reads SYEKPTTERKRKKAAAVARLRKQVRRSMPPKKKY. Over residues 45 to 70 the composition is skewed to basic residues; sequence RKRKKAAAVARLRKQVRRSMPPKKKY.

This sequence belongs to the bacterial ribosomal protein bS21 family.

The polypeptide is Small ribosomal subunit protein bS21B (Burkholderia pseudomallei (strain K96243)).